The chain runs to 551 residues: Probable 4-coumarate--CoA ligase 2 (551 aa).

Positions 205, 206, 207, 208, 209, and 213 each coordinate ATP. Positions 253 and 257 each coordinate (E)-4-coumaroyl-AMP. Residue K274 coordinates CoA. Residues 276–346 form an SBD1 region; sequence EFVRFLDLIQ…RFKGKLIIKQ (71 aa). Residues A323, Q346, G347, and T351 each contribute to the (E)-4-coumaroyl-AMP site. ATP-binding residues include Q346, G347, T351, D430, and R445. Residues 347 to 409 form an SBD2 region; that stretch reads GYGATELSPA…IKGPNVMLGY (63 aa). (E)-4-coumaroyl-AMP contacts are provided by K447 and K451. 2 residues coordinate CoA: K453 and G454. K537 serves as a coordination point for ATP.

The protein belongs to the ATP-dependent AMP-binding enzyme family. Mg(2+) is required as a cofactor.

The enzyme catalyses (E)-4-coumarate + ATP + CoA = (E)-4-coumaroyl-CoA + AMP + diphosphate. It catalyses the reaction (E)-4-coumarate + ATP + H(+) = (E)-4-coumaroyl-AMP + diphosphate. The catalysed reaction is (E)-4-coumaroyl-AMP + CoA = (E)-4-coumaroyl-CoA + AMP + H(+). It functions in the pathway phytoalexin biosynthesis; 3,4',5-trihydroxystilbene biosynthesis; 3,4',5-trihydroxystilbene from trans-4-coumarate: step 1/2. Functionally, carboxylate--CoA ligase that may use 4-coumarate as substrate. Follows a two-step reaction mechanism, wherein the carboxylate substrate first undergoes adenylation by ATP, followed by a thioesterification in the presence of CoA to yield the final CoA thioester. In Dictyostelium discoideum (Social amoeba), this protein is Probable 4-coumarate--CoA ligase 2 (4cl2).